A 188-amino-acid chain; its full sequence is Adenine phosphoribosyltransferase (188 aa).

It belongs to the purine/pyrimidine phosphoribosyltransferase family. In terms of assembly, homodimer.

It is found in the cytoplasm. It carries out the reaction AMP + diphosphate = 5-phospho-alpha-D-ribose 1-diphosphate + adenine. The protein operates within purine metabolism; AMP biosynthesis via salvage pathway; AMP from adenine: step 1/1. Its function is as follows. Catalyzes a salvage reaction resulting in the formation of AMP, that is energically less costly than de novo synthesis. The sequence is that of Adenine phosphoribosyltransferase from Burkholderia orbicola (strain MC0-3).